The following is a 1207-amino-acid chain: DNA-directed RNA polymerase subunit beta' (1207 aa).

Zn(2+)-binding residues include C60, C62, C75, and C78. Mg(2+) contacts are provided by D449, D451, and D453. Positions 822, 896, 903, and 906 each coordinate Zn(2+).

It belongs to the RNA polymerase beta' chain family. In terms of assembly, the RNAP catalytic core consists of 2 alpha, 1 beta, 1 beta' and 1 omega subunit. When a sigma factor is associated with the core the holoenzyme is formed, which can initiate transcription. Mg(2+) is required as a cofactor. Requires Zn(2+) as cofactor.

It carries out the reaction RNA(n) + a ribonucleoside 5'-triphosphate = RNA(n+1) + diphosphate. Its function is as follows. DNA-dependent RNA polymerase catalyzes the transcription of DNA into RNA using the four ribonucleoside triphosphates as substrates. This is DNA-directed RNA polymerase subunit beta' from Staphylococcus saprophyticus subsp. saprophyticus (strain ATCC 15305 / DSM 20229 / NCIMB 8711 / NCTC 7292 / S-41).